The following is a 374-amino-acid chain: DNA replication and repair protein RecF (374 aa).

30-37 contributes to the ATP binding site; the sequence is GPNAQGKT.

This sequence belongs to the RecF family.

It is found in the cytoplasm. Functionally, the RecF protein is involved in DNA metabolism; it is required for DNA replication and normal SOS inducibility. RecF binds preferentially to single-stranded, linear DNA. It also seems to bind ATP. The sequence is that of DNA replication and repair protein RecF from Lactobacillus gasseri (strain ATCC 33323 / DSM 20243 / BCRC 14619 / CIP 102991 / JCM 1131 / KCTC 3163 / NCIMB 11718 / NCTC 13722 / AM63).